Reading from the N-terminus, the 564-residue chain is Proline--tRNA ligase (564 aa).

It belongs to the class-II aminoacyl-tRNA synthetase family. ProS type 1 subfamily. In terms of assembly, homodimer.

The protein resides in the cytoplasm. It carries out the reaction tRNA(Pro) + L-proline + ATP = L-prolyl-tRNA(Pro) + AMP + diphosphate. Functionally, catalyzes the attachment of proline to tRNA(Pro) in a two-step reaction: proline is first activated by ATP to form Pro-AMP and then transferred to the acceptor end of tRNA(Pro). As ProRS can inadvertently accommodate and process non-cognate amino acids such as alanine and cysteine, to avoid such errors it has two additional distinct editing activities against alanine. One activity is designated as 'pretransfer' editing and involves the tRNA(Pro)-independent hydrolysis of activated Ala-AMP. The other activity is designated 'posttransfer' editing and involves deacylation of mischarged Ala-tRNA(Pro). The misacylated Cys-tRNA(Pro) is not edited by ProRS. The chain is Proline--tRNA ligase from Xanthomonas axonopodis pv. citri (strain 306).